The sequence spans 146 residues: Putative pre-16S rRNA nuclease (146 aa).

This sequence belongs to the YqgF nuclease family.

The protein resides in the cytoplasm. Could be a nuclease involved in processing of the 5'-end of pre-16S rRNA. The chain is Putative pre-16S rRNA nuclease from Pseudomonas syringae pv. syringae (strain B728a).